The primary structure comprises 348 residues: Histidinol-phosphate aminotransferase (348 aa).

Position 207 is an N6-(pyridoxal phosphate)lysine (Lys207).

The protein belongs to the class-II pyridoxal-phosphate-dependent aminotransferase family. Histidinol-phosphate aminotransferase subfamily. Homodimer. The cofactor is pyridoxal 5'-phosphate.

The catalysed reaction is L-histidinol phosphate + 2-oxoglutarate = 3-(imidazol-4-yl)-2-oxopropyl phosphate + L-glutamate. The protein operates within amino-acid biosynthesis; L-histidine biosynthesis; L-histidine from 5-phospho-alpha-D-ribose 1-diphosphate: step 7/9. This is Histidinol-phosphate aminotransferase from Crocosphaera subtropica (strain ATCC 51142 / BH68) (Cyanothece sp. (strain ATCC 51142)).